We begin with the raw amino-acid sequence, 306 residues long: tRNA-cytidine(32) 2-sulfurtransferase (306 aa).

A disordered region spans residues M1–Q25. A compositionally biased stretch (basic and acidic residues) spans A14 to Q25. Positions S57 to S62 match the PP-loop motif motif. The [4Fe-4S] cluster site is built by C132, C135, and C223. The segment at A286–V306 is disordered. Residues A297–V306 are compositionally biased toward acidic residues.

It belongs to the TtcA family. In terms of assembly, homodimer. The cofactor is Mg(2+). [4Fe-4S] cluster serves as cofactor.

It is found in the cytoplasm. The enzyme catalyses cytidine(32) in tRNA + S-sulfanyl-L-cysteinyl-[cysteine desulfurase] + AH2 + ATP = 2-thiocytidine(32) in tRNA + L-cysteinyl-[cysteine desulfurase] + A + AMP + diphosphate + H(+). It functions in the pathway tRNA modification. Catalyzes the ATP-dependent 2-thiolation of cytidine in position 32 of tRNA, to form 2-thiocytidine (s(2)C32). The sulfur atoms are provided by the cysteine/cysteine desulfurase (IscS) system. The chain is tRNA-cytidine(32) 2-sulfurtransferase from Stenotrophomonas maltophilia (strain K279a).